The primary structure comprises 655 residues: Acetyl-coenzyme A synthetase (655 aa).

Residues 196–199 and Thr-316 each bind CoA; that span reads RGGR. Residues 392-394, 416-421, Asp-508, and Arg-523 each bind ATP; these read GEP and DTWWQT. Residue Ser-531 participates in CoA binding. Arg-534 is an ATP binding site. Mg(2+) contacts are provided by Val-545, His-547, and Val-550. Lys-620 is subject to N6-acetyllysine.

It belongs to the ATP-dependent AMP-binding enzyme family. The cofactor is Mg(2+). Acetylated. Deacetylation by the SIR2-homolog deacetylase activates the enzyme.

The enzyme catalyses acetate + ATP + CoA = acetyl-CoA + AMP + diphosphate. Functionally, catalyzes the conversion of acetate into acetyl-CoA (AcCoA), an essential intermediate at the junction of anabolic and catabolic pathways. AcsA undergoes a two-step reaction. In the first half reaction, AcsA combines acetate with ATP to form acetyl-adenylate (AcAMP) intermediate. In the second half reaction, it can then transfer the acetyl group from AcAMP to the sulfhydryl group of CoA, forming the product AcCoA. The polypeptide is Acetyl-coenzyme A synthetase (Nitrosomonas europaea (strain ATCC 19718 / CIP 103999 / KCTC 2705 / NBRC 14298)).